A 227-amino-acid chain; its full sequence is Ribosomal RNA large subunit methyltransferase E (227 aa).

Residues glycine 78, tryptophan 80, aspartate 103, aspartate 119, and aspartate 143 each coordinate S-adenosyl-L-methionine. Catalysis depends on lysine 183, which acts as the Proton acceptor.

This sequence belongs to the class I-like SAM-binding methyltransferase superfamily. RNA methyltransferase RlmE family.

It localises to the cytoplasm. It catalyses the reaction uridine(2552) in 23S rRNA + S-adenosyl-L-methionine = 2'-O-methyluridine(2552) in 23S rRNA + S-adenosyl-L-homocysteine + H(+). Functionally, specifically methylates the uridine in position 2552 of 23S rRNA at the 2'-O position of the ribose in the fully assembled 50S ribosomal subunit. This is Ribosomal RNA large subunit methyltransferase E from Rickettsia akari (strain Hartford).